The chain runs to 429 residues: Enolase (429 aa).

Gln-164 contributes to the (2R)-2-phosphoglycerate binding site. The active-site Proton donor is Glu-206. Mg(2+)-binding residues include Asp-243, Glu-286, and Asp-313. The (2R)-2-phosphoglycerate site is built by Lys-338, Arg-367, Ser-368, and Lys-389. Residue Lys-338 is the Proton acceptor of the active site.

It belongs to the enolase family. Mg(2+) serves as cofactor.

The protein localises to the cytoplasm. The protein resides in the secreted. It localises to the cell surface. It carries out the reaction (2R)-2-phosphoglycerate = phosphoenolpyruvate + H2O. The protein operates within carbohydrate degradation; glycolysis; pyruvate from D-glyceraldehyde 3-phosphate: step 4/5. Catalyzes the reversible conversion of 2-phosphoglycerate (2-PG) into phosphoenolpyruvate (PEP). It is essential for the degradation of carbohydrates via glycolysis. This Thermosipho africanus (strain TCF52B) protein is Enolase.